Reading from the N-terminus, the 49-residue chain is Large ribosomal subunit protein bL33 (49 aa).

This sequence belongs to the bacterial ribosomal protein bL33 family.

The sequence is that of Large ribosomal subunit protein bL33 from Alkaliphilus oremlandii (strain OhILAs) (Clostridium oremlandii (strain OhILAs)).